The following is a 208-amino-acid chain: Histone H1.3 (208 aa).

S2 carries the post-translational modification N-acetylserine. An H15 domain is found at A37–E113. A disordered region spans residues E113–T208. Composition is skewed to basic residues over residues K148–K158 and K165–P191. Positions K192–T208 are enriched in low complexity.

This sequence belongs to the histone H1/H5 family.

The protein localises to the nucleus. The protein resides in the chromosome. Its function is as follows. Histones H1 are necessary for the condensation of nucleosome chains into higher-order structures. In Caenorhabditis elegans, this protein is Histone H1.3 (hil-3).